The primary structure comprises 200 residues: Inner membrane-spanning protein YciB (200 aa).

The next 6 membrane-spanning stretches (helical) occupy residues 7–27, 32–52, 56–76, 93–113, 126–146, and 153–173; these read HPLFKLATELGPLIVFFVVNA, FAATGAFMVAIVAAMIASYVV, VPLMAIVTGIVVLVFGTLTLV, LFAAVLGGGLLFNRSFIAIMF, ILTFRWALFFAAMAVLNEIIW, and FWVGFKAFGVVPLTMIFAIAQ.

Belongs to the YciB family.

It localises to the cell inner membrane. Functionally, plays a role in cell envelope biogenesis, maintenance of cell envelope integrity and membrane homeostasis. The sequence is that of Inner membrane-spanning protein YciB from Bradyrhizobium sp. (strain BTAi1 / ATCC BAA-1182).